The primary structure comprises 830 residues: Heavy metal tolerance protein (830 aa).

A signal peptide spans 1–27 (MVLRYNSPRLNILELVLLYVGFFSIGS). A run of 3 helical transmembrane segments spans residues 51–71 (PIGI…VDIS), 88–108 (TTVV…ISCA), and 126–146 (LSVL…IVYS). A glycan (N-linked (GlcNAc...) asparagine) is linked at Asn150. 3 helical membrane-spanning segments follow: residues 156–176 (IVLA…AIYL), 263–283 (FQIF…ILAP), and 304–324 (DVIL…IGSL). Residues 265–550 (IFICIVLLFL…FGTLYRSLQN (286 aa)) enclose the ABC transmembrane type-1 domain. N-linked (GlcNAc...) asparagine glycosylation occurs at Asn350. 2 helical membrane-spanning segments follow: residues 381-401 (VVFQ…YFFI) and 403-423 (FDIY…YVTV). Residues 429-433 (RTEAR), 492-495 (NIVQ), and Gly542 each bind glutathione. Residues 490–511 (FLNIVQGGIFTFSLAIACLLSA) traverse the membrane as a helical segment. Residues 584–818 (VIFSHVSFAY…DGGAYKKMWF (235 aa)) enclose the ABC transporter domain. Residues Tyr593 and 617–628 (GESGGGKSTIMR) contribute to the ATP site.

Belongs to the ABC transporter superfamily. ABCB family. Heavy Metal importer (TC 3.A.1.210) subfamily.

The protein resides in the vacuole membrane. In terms of biological role, involved in metal tolerance. Probably involved in the transport of metal-bound phytochelatins. Compartmentalizes cadmium within vacuoles, thereby protecting cells from cadmium toxicity. The protein is Heavy metal tolerance protein (hmt1) of Schizosaccharomyces pombe (strain 972 / ATCC 24843) (Fission yeast).